The following is a 175-amino-acid chain: Keratin-associated protein 13-2 (175 aa).

A run of 5 repeats spans residues 46–55 (CQLGSSLYRG), 56–65 (CQEICWEPTS), 66–75 (CQTSYVESSP), 76–85 (CQTSCYRPRT), and 92–101 (CKTTYSGSLG). Positions 46–101 (CQLGSSLYRGCQEICWEPTSCQTSYVESSPCQTSCYRPRTSLLCSPCKTTYSGSLG) are 5 X 10 AA approximate repeats.

The protein belongs to the PMG family. As to quaternary structure, interacts with hair keratins.

In the hair cortex, hair keratin intermediate filaments are embedded in an interfilamentous matrix, consisting of hair keratin-associated proteins (KRTAP), which are essential for the formation of a rigid and resistant hair shaft through their extensive disulfide bond cross-linking with abundant cysteine residues of hair keratins. The matrix proteins include the high-sulfur and high-glycine-tyrosine keratins. This Homo sapiens (Human) protein is Keratin-associated protein 13-2 (KRTAP13-2).